The sequence spans 246 residues: Probable 2-phosphosulfolactate phosphatase (246 aa).

This sequence belongs to the ComB family. It depends on Mg(2+) as a cofactor.

It catalyses the reaction (2R)-O-phospho-3-sulfolactate + H2O = (2R)-3-sulfolactate + phosphate. This chain is Probable 2-phosphosulfolactate phosphatase, found in Synechococcus sp. (strain WH7803).